We begin with the raw amino-acid sequence, 256 residues long: Non-structural protein 1 (256 aa).

The protein localises to the host cytoplasm. It is found in the host perinuclear region. Its function is as follows. Plays a role in inhibition of the host innate immune system by counteracting the type I interferon signaling. The chain is Non-structural protein 1 from Infectious salmon anemia virus (isolate Atlantic salmon/Norway/810/9/99) (ISAV).